The chain runs to 177 residues: Large ribosomal subunit protein uL6 (177 aa).

Belongs to the universal ribosomal protein uL6 family. In terms of assembly, part of the 50S ribosomal subunit.

In terms of biological role, this protein binds to the 23S rRNA, and is important in its secondary structure. It is located near the subunit interface in the base of the L7/L12 stalk, and near the tRNA binding site of the peptidyltransferase center. This Klebsiella pneumoniae subsp. pneumoniae (strain ATCC 700721 / MGH 78578) protein is Large ribosomal subunit protein uL6.